A 150-amino-acid chain; its full sequence is Peptide deformylase (150 aa).

Fe cation-binding residues include cysteine 88 and histidine 130. Residue glutamate 131 is part of the active site. Histidine 134 is a Fe cation binding site.

Belongs to the polypeptide deformylase family. It depends on Fe(2+) as a cofactor.

The catalysed reaction is N-terminal N-formyl-L-methionyl-[peptide] + H2O = N-terminal L-methionyl-[peptide] + formate. In terms of biological role, removes the formyl group from the N-terminal Met of newly synthesized proteins. Requires at least a dipeptide for an efficient rate of reaction. N-terminal L-methionine is a prerequisite for activity but the enzyme has broad specificity at other positions. This is Peptide deformylase from Desulfitobacterium hafniense (strain Y51).